The following is a 249-amino-acid chain: Small ribosomal subunit protein eS6 (249 aa).

Residues 216 to 229 (RMKEAKEKRQEQIA) are compositionally biased toward basic and acidic residues. The segment at 216–249 (RMKEAKEKRQEQIAKRRRLSSLRASTSKSESSQK) is disordered. Phosphoserine is present on residues serine 235, serine 236, serine 240, serine 244, and serine 247. Low complexity predominate over residues 236-249 (SLRASTSKSESSQK).

Belongs to the eukaryotic ribosomal protein eS6 family. As to quaternary structure, component of the small ribosomal subunit. Part of the small subunit (SSU) processome, composed of more than 70 proteins and the RNA chaperone small nucleolar RNA (snoRNA) U3. Ribosomal protein S6 is the major substrate of protein kinases in eukaryote ribosomes. The phosphorylation is stimulated by growth factors, tumor promoting agents, and mitogens. It is dephosphorylated at growth arrest.

Its subcellular location is the cytoplasm. The protein resides in the nucleus. It localises to the nucleolus. Component of the 40S small ribosomal subunit. Plays an important role in controlling cell growth and proliferation through the selective translation of particular classes of mRNA. Part of the small subunit (SSU) processome, first precursor of the small eukaryotic ribosomal subunit. During the assembly of the SSU processome in the nucleolus, many ribosome biogenesis factors, an RNA chaperone and ribosomal proteins associate with the nascent pre-rRNA and work in concert to generate RNA folding, modifications, rearrangements and cleavage as well as targeted degradation of pre-ribosomal RNA by the RNA exosome. The protein is Small ribosomal subunit protein eS6 (RPS6) of Gallus gallus (Chicken).